The chain runs to 472 residues: ATP synthase subunit beta (472 aa).

155–162 (GGAGVGKT) serves as a coordination point for ATP.

The protein belongs to the ATPase alpha/beta chains family. In terms of assembly, F-type ATPases have 2 components, CF(1) - the catalytic core - and CF(0) - the membrane proton channel. CF(1) has five subunits: alpha(3), beta(3), gamma(1), delta(1), epsilon(1). CF(0) has three main subunits: a(1), b(2) and c(9-12). The alpha and beta chains form an alternating ring which encloses part of the gamma chain. CF(1) is attached to CF(0) by a central stalk formed by the gamma and epsilon chains, while a peripheral stalk is formed by the delta and b chains.

It localises to the cell membrane. It catalyses the reaction ATP + H2O + 4 H(+)(in) = ADP + phosphate + 5 H(+)(out). Its function is as follows. Produces ATP from ADP in the presence of a proton gradient across the membrane. The catalytic sites are hosted primarily by the beta subunits. This chain is ATP synthase subunit beta, found in Fervidobacterium islandicum.